Here is a 348-residue protein sequence, read N- to C-terminus: MRSDWIFGACAVPDARMRSAALARQEQLTKPPGALGRLEHLAVQLAAWQRTERPGAQRVWIAVYAADHGVAAEGVSAFPQAVTGEMVRNFARGGAAIAVLARELGARLEVVNLGVVNDPGDLPRVRRAWIAPSSANICEQPAMTATQLRDAIAAGADSIAQARSCDTQLFVGGEMGIGNTTSAAALACALLSQFPQAMAGAGTGLDAEGIAHKATVITRALALHADASSPLERLRRLGGFEIAALVGAYIAAAQAGIPVLVDGFITTAAALVATRLNPGVREWLLFGHRSQERGHAALLRALDAEPLLQLDLRLGEASGAAVAIPLLRSACALHNGMATFAEAGVSDA.

The Proton acceptor role is filled by Glu-316.

It belongs to the CobT family.

It catalyses the reaction 5,6-dimethylbenzimidazole + nicotinate beta-D-ribonucleotide = alpha-ribazole 5'-phosphate + nicotinate + H(+). It functions in the pathway nucleoside biosynthesis; alpha-ribazole biosynthesis; alpha-ribazole from 5,6-dimethylbenzimidazole: step 1/2. Catalyzes the synthesis of alpha-ribazole-5'-phosphate from nicotinate mononucleotide (NAMN) and 5,6-dimethylbenzimidazole (DMB). This chain is Nicotinate-nucleotide--dimethylbenzimidazole phosphoribosyltransferase, found in Xanthomonas axonopodis pv. citri (strain 306).